Reading from the N-terminus, the 515-residue chain is Sphingolipid 10-desaturase (515 aa).

Residues 3 to 23 (AVWALLWALQLGTLVGCALVL) traverse the membrane as a helical segment. A Cytochrome b5 heme-binding domain is found at 46-113 (AKPISDQKAA…DISFVFRVMH (68 aa)). 2 residues coordinate heme: His-90 and His-113. A helical transmembrane segment spans residues 198-218 (TWLLWNTAVLISIIALSVISM). The short motif at 245-249 (HDAEH) is the Histidine box-1 element. Residues 258 to 278 (LNDILGWIYGTVFLGVNGAWW) traverse the membrane as a helical segment. A Histidine box-2 motif is present at residues 281–286 (EHREHH). The next 3 membrane-spanning stretches (helical) occupy residues 322–342 (IIHF…FIVG), 359–379 (PWTI…LSQT), and 382–402 (PIPV…QLLG). Positions 447–451 (HYSHH) match the Histidine box-3 motif.

Belongs to the fatty acid desaturase type 1 family. Fe(2+) serves as cofactor.

Its subcellular location is the membrane. The catalysed reaction is a (4E,8E)-4-sphinga-4,8-dienine ceramide + 2 Fe(II)-[cytochrome b5] + O2 + 2 H(+) = an N-acyl-(4E,8E,10E)-sphingatrienine + 2 Fe(III)-[cytochrome b5] + 2 H2O. Its pathway is lipid metabolism; sphingolipid metabolism. Fatty acid desaturase that catalyzes the introduction of the third double bond at the Delta(10) position in d18:3Delta4,8,10 triunsaturated sphingolipid long fatty acid chains. The cytochrome b5 domain probably acts as the direct electron donor to the active site of the desaturase. This is Sphingolipid 10-desaturase from Thalassiosira pseudonana (Marine diatom).